The primary structure comprises 543 residues: Carboxypeptidase Y homolog A (543 aa).

A signal peptide spans Met1–Ala17. Residues Gln18–Lys124 constitute a propeptide that is removed on maturation. Disulfide bonds link Cys179–Cys419, Cys313–Cys327, Cys337–Cys360, Cys344–Cys353, and Cys382–Cys389. N-linked (GlcNAc...) asparagine glycosylation occurs at Asn210. The active site involves Ser266. Asp458 is a catalytic residue. Asn509 carries N-linked (GlcNAc...) asparagine glycosylation. His520 is a catalytic residue.

Belongs to the peptidase S10 family.

Its subcellular location is the vacuole. The catalysed reaction is Release of a C-terminal amino acid with broad specificity.. Functionally, vacuolar carboxypeptidase involved in degradation of small peptides. Digests preferentially peptides containing an aliphatic or hydrophobic residue in P1' position, as well as methionine, leucine or phenylalanine in P1 position of ester substrate. This is Carboxypeptidase Y homolog A (cpyA) from Trichophyton verrucosum (strain HKI 0517).